We begin with the raw amino-acid sequence, 78 residues long: Large ribosomal subunit protein bL28 (78 aa).

It belongs to the bacterial ribosomal protein bL28 family.

The sequence is that of Large ribosomal subunit protein bL28 from Prochlorococcus marinus (strain MIT 9301).